The following is a 131-amino-acid chain: Colicin-N immunity protein (131 aa).

The next 2 helical transmembrane spans lie at 66–84 and 104–124; these read ILTP…FLLT and VFVF…IFVL.

It is found in the cell membrane. The polypeptide is Colicin-N immunity protein (cni) (Escherichia coli).